The chain runs to 212 residues: Thymidylate kinase (212 aa).

11–18 (GGEGVGKS) provides a ligand contact to ATP.

The protein belongs to the thymidylate kinase family.

It catalyses the reaction dTMP + ATP = dTDP + ADP. Phosphorylation of dTMP to form dTDP in both de novo and salvage pathways of dTTP synthesis. The chain is Thymidylate kinase from Chromohalobacter salexigens (strain ATCC BAA-138 / DSM 3043 / CIP 106854 / NCIMB 13768 / 1H11).